The sequence spans 270 residues: Eukaryotic translation initiation factor 3 subunit G-1 (270 aa).

The 79-residue stretch at 189-267 folds into the RRM domain; that stretch reads AAIRISNLSE…LILSVEWSKP (79 aa).

It belongs to the eIF-3 subunit G family. In terms of assembly, component of the eukaryotic translation initiation factor 3 (eIF-3) complex. The eIF-3 complex interacts with pix.

It is found in the cytoplasm. RNA-binding component of the eukaryotic translation initiation factor 3 (eIF-3) complex, which is involved in protein synthesis of a specialized repertoire of mRNAs and, together with other initiation factors, stimulates binding of mRNA and methionyl-tRNAi to the 40S ribosome. The eIF-3 complex specifically targets and initiates translation of a subset of mRNAs involved in cell proliferation. This subunit can bind 18S rRNA. The sequence is that of Eukaryotic translation initiation factor 3 subunit G-1 from Drosophila ananassae (Fruit fly).